Consider the following 118-residue polypeptide: uncharacterized protein (118 aa).

Positions 1–27 (MPIKEPDVWALIWSWLQTNLSSSSAQS) are cleaved as a signal peptide.

This is an uncharacterized protein from Haemophilus influenzae (strain ATCC 51907 / DSM 11121 / KW20 / Rd).